An 89-amino-acid chain; its full sequence is MSITAERKQALIKEYATKEGDTGSPEVQVAVLSERIANLTEHFKGHKNDNHSRRGLLKLVSQRRRLLDYVKGVDHARYQALITRLGLRR.

The protein belongs to the universal ribosomal protein uS15 family. In terms of assembly, part of the 30S ribosomal subunit. Forms a bridge to the 50S subunit in the 70S ribosome, contacting the 23S rRNA.

One of the primary rRNA binding proteins, it binds directly to 16S rRNA where it helps nucleate assembly of the platform of the 30S subunit by binding and bridging several RNA helices of the 16S rRNA. Functionally, forms an intersubunit bridge (bridge B4) with the 23S rRNA of the 50S subunit in the ribosome. This chain is Small ribosomal subunit protein uS15, found in Brucella abortus (strain S19).